The sequence spans 789 residues: Polyribonucleotide nucleotidyltransferase (789 aa).

Residues Asp494 and Asp500 each coordinate Mg(2+). The region spanning 561-620 (PRIESIFINKDKIRNVIGSGGKNIREICEKTGARVEIMQDGTVMIYAINNDAVEYAKNMI) is the KH domain. Residues 630–697 (GKVFDGTVIE…DREYVQLSMR (68 aa)) form the S1 motif domain. The tract at residues 709 to 789 (GELYNIRKTN…NEVPRKPRFF (81 aa)) is disordered. Basic residues predominate over residues 737–749 (SEKKRRGSGRSRR). The span at 763–780 (NNGFGNGNRSFNDNRNGN) shows a compositional bias: low complexity.

The protein belongs to the polyribonucleotide nucleotidyltransferase family. It depends on Mg(2+) as a cofactor.

The protein resides in the cytoplasm. The catalysed reaction is RNA(n+1) + phosphate = RNA(n) + a ribonucleoside 5'-diphosphate. Involved in mRNA degradation. Catalyzes the phosphorolysis of single-stranded polyribonucleotides processively in the 3'- to 5'-direction. The protein is Polyribonucleotide nucleotidyltransferase of Ehrlichia ruminantium (strain Gardel).